Here is a 535-residue protein sequence, read N- to C-terminus: Methylmalonate-semialdehyde/malonate-semialdehyde dehydrogenase [acylating], mitochondrial (535 aa).

The N-terminal 32 residues, 1-32 (MAAAVAAAAAMRSRILQVSSKVNATWYPASSF), are a transit peptide targeting the mitochondrion. 4 positions are modified to N6-acetyllysine; alternate: Lys47, Lys52, Lys55, and Lys76. Lys47, Lys52, Lys55, and Lys76 each carry N6-succinyllysine; alternate. Lys87 carries the post-translational modification N6-acetyllysine. Lys117 and Lys129 each carry N6-acetyllysine; alternate. An N6-succinyllysine; alternate mark is found at Lys117 and Lys129. Positions 183, 185, 209, 212, 213, and 262 each coordinate NAD(+). At Ser262 the chain carries Phosphoserine. Lys298 carries the post-translational modification N6-acetyllysine. Cys317 (nucleophile) is an active-site residue. An N6-acetyllysine mark is found at Lys330 and Lys331. Residues Lys364 and Lys376 each carry the N6-acetyllysine; alternate modification. N6-succinyllysine; alternate occurs at positions 364 and 376. Ser380 carries the post-translational modification Phosphoserine. Lys391 is modified (N6-succinyllysine). Position 417 (Glu417) interacts with NAD(+). Residue Lys500 is modified to N6-acetyllysine. Lys517 carries the post-translational modification N6-succinyllysine.

This sequence belongs to the aldehyde dehydrogenase family. As to quaternary structure, homotetramer. Acetylation of Lys-55; Lys-117 and Lys-331 is observed in liver mitochondria from fasted mice but not from fed mice.

The protein localises to the mitochondrion. The enzyme catalyses 3-oxopropanoate + NAD(+) + CoA + H2O = hydrogencarbonate + acetyl-CoA + NADH + H(+). The catalysed reaction is 2-methyl-3-oxopropanoate + NAD(+) + CoA + H2O = propanoyl-CoA + hydrogencarbonate + NADH + H(+). It carries out the reaction (R)-2-methyl-3-oxopropanoate + NAD(+) + CoA + H2O = propanoyl-CoA + hydrogencarbonate + NADH + H(+). It catalyses the reaction (S)-2-methyl-3-oxopropanoate + NAD(+) + CoA + H2O = propanoyl-CoA + hydrogencarbonate + NADH + H(+). In terms of biological role, malonate and methylmalonate semialdehyde dehydrogenase involved in the catabolism of valine, thymine, and compounds catabolized by way of beta-alanine, including uracil and cytidine. This chain is Methylmalonate-semialdehyde/malonate-semialdehyde dehydrogenase [acylating], mitochondrial, found in Mus musculus (Mouse).